A 208-amino-acid polypeptide reads, in one-letter code: Thymidylate kinase (208 aa).

Residue 10–17 (GPEGSGKT) participates in ATP binding.

Belongs to the thymidylate kinase family.

It carries out the reaction dTMP + ATP = dTDP + ADP. Its function is as follows. Phosphorylation of dTMP to form dTDP in both de novo and salvage pathways of dTTP synthesis. This chain is Thymidylate kinase, found in Bacillus cereus (strain ATCC 14579 / DSM 31 / CCUG 7414 / JCM 2152 / NBRC 15305 / NCIMB 9373 / NCTC 2599 / NRRL B-3711).